A 476-amino-acid polypeptide reads, in one-letter code: ATP synthase subunit beta (476 aa).

162–169 (GGAGVGKT) is a binding site for ATP.

The protein belongs to the ATPase alpha/beta chains family. F-type ATPases have 2 components, CF(1) - the catalytic core - and CF(0) - the membrane proton channel. CF(1) has five subunits: alpha(3), beta(3), gamma(1), delta(1), epsilon(1). CF(0) has three main subunits: a(1), b(2) and c(9-12). The alpha and beta chains form an alternating ring which encloses part of the gamma chain. CF(1) is attached to CF(0) by a central stalk formed by the gamma and epsilon chains, while a peripheral stalk is formed by the delta and b chains.

The protein localises to the cell membrane. It catalyses the reaction ATP + H2O + 4 H(+)(in) = ADP + phosphate + 5 H(+)(out). Functionally, produces ATP from ADP in the presence of a proton gradient across the membrane. The catalytic sites are hosted primarily by the beta subunits. The sequence is that of ATP synthase subunit beta from Mycoplasma capricolum subsp. capricolum (strain California kid / ATCC 27343 / NCTC 10154).